The chain runs to 187 residues: Hypoxanthine/guanine phosphoribosyltransferase (187 aa).

It belongs to the purine/pyrimidine phosphoribosyltransferase family. Archaeal HPRT subfamily. In terms of assembly, homodimer.

It is found in the cytoplasm. The catalysed reaction is IMP + diphosphate = hypoxanthine + 5-phospho-alpha-D-ribose 1-diphosphate. It catalyses the reaction GMP + diphosphate = guanine + 5-phospho-alpha-D-ribose 1-diphosphate. Its pathway is purine metabolism; IMP biosynthesis via salvage pathway; IMP from hypoxanthine: step 1/1. Catalyzes a salvage reaction resulting in the formation of IMP that is energically less costly than de novo synthesis. The chain is Hypoxanthine/guanine phosphoribosyltransferase from Methanopyrus kandleri (strain AV19 / DSM 6324 / JCM 9639 / NBRC 100938).